A 334-amino-acid polypeptide reads, in one-letter code: 3-keto-steroid reductase/17-beta-hydroxysteroid dehydrogenase 7 (334 aa).

The Extracellular portion of the chain corresponds to 1-229; sequence MRKVVLITGA…VTCPGVVMTN (229 aa). Residue 8-15 participates in NAD(+) binding; it reads TGASSGIG. Asn37 carries N-linked (GlcNAc...) asparagine glycosylation. Residue Ser171 participates in substrate binding. Asn178 is a glycosylation site (N-linked (GlcNAc...) asparagine). Tyr193 serves as the catalytic Proton acceptor. Asn229 carries an N-linked (GlcNAc...) asparagine glycan. A helical transmembrane segment spans residues 230–250; it reads LTYGILPPFVWTLLLPVIWLL. Residues 251–334 lie on the Cytoplasmic side of the membrane; that stretch reads RFFAHAFTVT…ITIQKSDHHS (84 aa).

Belongs to the short-chain dehydrogenases/reductases (SDR) family. ERG27 subfamily. As to quaternary structure, binds to the short form of prolactin receptor. Phosphorylated. Most abundant in ovaries of pregnant animals.

The protein localises to the endoplasmic reticulum membrane. The enzyme catalyses 17beta-estradiol + NADP(+) = estrone + NADPH + H(+). The catalysed reaction is a 3beta-hydroxysteroid + NADP(+) = a 3-oxosteroid + NADPH + H(+). It catalyses the reaction 4alpha-methyl-5alpha-cholest-7-en-3beta-ol + NADP(+) = 4alpha-methyl-5alpha-cholest-7-en-3-one + NADPH + H(+). It carries out the reaction 4alpha-methyl-5alpha-cholest-8-en-3-one + NADPH + H(+) = 4alpha-methyl-5alpha-cholest-8-en-3beta-ol + NADP(+). The enzyme catalyses 3-dehydro-4alpha-methylzymosterol + NADPH + H(+) = 4alpha-methylzymosterol + NADP(+). The catalysed reaction is zymosterone + NADPH + H(+) = zymosterol + NADP(+). It catalyses the reaction 5alpha-cholest-8-en-3-one + NADPH + H(+) = 5alpha-cholest-8-en-3beta-ol + NADP(+). It carries out the reaction 5alpha-androstane-3beta,17beta-diol + NADP(+) = 17beta-hydroxy-5alpha-androstan-3-one + NADPH + H(+). The enzyme catalyses 5alpha-androstane-3alpha,17beta-diol + NADP(+) = 17beta-hydroxy-5alpha-androstan-3-one + NADPH + H(+). Its pathway is steroid biosynthesis; estrogen biosynthesis. It functions in the pathway steroid biosynthesis; zymosterol biosynthesis; zymosterol from lanosterol: step 5/6. In terms of biological role, bifunctional enzyme involved in steroid-hormone metabolism and cholesterol biosynthesis. Catalyzes the NADP(H)-dependent reduction of estrogens and androgens and regulates the biological potency of these steroids. Converts estrone (E1) to a more potent estrogen, 17beta-estradiol (E2). Converts dihydrotestosterone (DHT) to an inactive form. Also participates in the post-squalene cholesterol biosynthesis, as a 3-ketosteroid reductase. This is 3-keto-steroid reductase/17-beta-hydroxysteroid dehydrogenase 7 (Hsd17b7) from Rattus norvegicus (Rat).